We begin with the raw amino-acid sequence, 445 residues long: Exodeoxyribonuclease 7 large subunit (445 aa).

It belongs to the XseA family. As to quaternary structure, heterooligomer composed of large and small subunits.

It is found in the cytoplasm. The enzyme catalyses Exonucleolytic cleavage in either 5'- to 3'- or 3'- to 5'-direction to yield nucleoside 5'-phosphates.. In terms of biological role, bidirectionally degrades single-stranded DNA into large acid-insoluble oligonucleotides, which are then degraded further into small acid-soluble oligonucleotides. This chain is Exodeoxyribonuclease 7 large subunit, found in Limosilactobacillus reuteri (strain DSM 20016) (Lactobacillus reuteri).